The sequence spans 429 residues: MKKQRNLRSMAAQAVEQVVEQGQSLSNILPPLQQKVSDKDKALLQELCFGVLRTLSQLDWLINKLMARPMTGKQRTVHYLIMVGLYQLLYTRIPPHAALAETVEGAIAIKRPQLKGLINGVLRQFQRQQEELLAEFNASDARYLHPSWLLKRLQKAYPEQWQSIVEANNQRPPMWLRVNRTHHSRDRWLALLDEAGMKGFPHADYPDAVRLETPAPVHALPGFEDGWVTVQDASAQGCMTWLAPQNGEHILDLCAAPGGKTTHILEVAPEAQVVAVDIDEQRLSRVYDNLKRLGMKATVKQGDGRYPSQWCGEQQFDRILLDAPCSATGVIRRHPDIKWLRRDRDIPELAQLQSEILDAIWPHLKSGGTLVYATCSVLPEENSLQIKAFLQRTADAELCETGTPEQPGKQNLPGAEEGDGFFYAKLIKK.

S-adenosyl-L-methionine-binding positions include 254–260, Asp277, Asp303, and Asp322; that span reads CAAPGGK. The Nucleophile role is filled by Cys375.

The protein belongs to the class I-like SAM-binding methyltransferase superfamily. RsmB/NOP family.

It localises to the cytoplasm. It carries out the reaction cytidine(967) in 16S rRNA + S-adenosyl-L-methionine = 5-methylcytidine(967) in 16S rRNA + S-adenosyl-L-homocysteine + H(+). Functionally, specifically methylates the cytosine at position 967 (m5C967) of 16S rRNA. In Escherichia coli (strain SMS-3-5 / SECEC), this protein is Ribosomal RNA small subunit methyltransferase B.